Here is a 246-residue protein sequence, read N- to C-terminus: MFKAAINAEVFKDAIEAVSTLVDEAKFRITKDSISARAVDPANVAMVAFDLNAKAFDTFEATDGEIGIDLVRFMDILGMTARDDRLELNLNEETRKLEIRTGGLAYTLSLLDPGSIRKEPKVPALELPGKIVLNGAELKRAVKAAEKVSDHMALGVQDKTFYVEAEGDLDKVRLEIPESNLISLQATSNVRSLFSLDYLNDIVKSLGKAEQVTIDLGTDYPVKFTFSIASGNGTVIYLLAPRIESE.

Belongs to the PCNA family. Homotrimer. The subunits circularize to form a toroid; DNA passes through its center. Replication factor C (RFC) is required to load the toroid on the DNA.

Sliding clamp subunit that acts as a moving platform for DNA processing. Responsible for tethering the catalytic subunit of DNA polymerase and other proteins to DNA during high-speed replication. The sequence is that of DNA polymerase sliding clamp from Methanocella arvoryzae (strain DSM 22066 / NBRC 105507 / MRE50).